The sequence spans 430 residues: Histidine--tRNA ligase (430 aa).

Belongs to the class-II aminoacyl-tRNA synthetase family. In terms of assembly, homodimer.

The protein resides in the cytoplasm. The catalysed reaction is tRNA(His) + L-histidine + ATP = L-histidyl-tRNA(His) + AMP + diphosphate + H(+). The polypeptide is Histidine--tRNA ligase (Chlamydia caviae (strain ATCC VR-813 / DSM 19441 / 03DC25 / GPIC) (Chlamydophila caviae)).